The sequence spans 986 residues: MAAVAKRTVTDWQLKPALGLAPLDQGRARQELAEIAAAAREEGLARLAKFLAGKGAGQDFLAAVFDLSPFLRDTSRRRPRILDALFDQPVEARLEAITAAIEQAPLAETVSESSLMMELRQCKAEAHFLIALADLAGEAETSLTVRRLSDLADACTRAAVDFLLRDAHGQGKLKLPDLDNPSLQSGWILLGMGKLGAHELNFSSDIDLVVFFDPDAPAVVDRLDATELFSRLTRRLVRILQDRTEHGYVFRTDLRLRPDPGSTPLAIPVEAALRYYEARGQNWERAAMIKARPVAGDLAAGAAFLRELQPYIWRKYMDYAAIADVHSIKRQIHAHKGHGEIAVKGHNVKLGRGGIREIEFFVQTQQLIAGGRFPELRGRETVPMLGQLAARGWITADARDALARQYWFLRRVEHAVQMVADEQTHTLPEDDEGLERIAHMLGFGDAAAFSQAFRASLLQVERHYAALFETAPELSAGIGNLVFTGDVDDPNTLQTLQGLGFQRPSDICRVIRGWHFGRYRVTQSAEARERLTELTPALLKAFGQTRRADEALIRFDEFLAGLPAGIQLFSLLQSNPALLKLMATIMGAAPRLAAIITRRPHVFDGLLDPALLTELPDRVYLSARLSAFLEGDRAYEEVLDRLRIFASEQKFLIGVRLLAGSIDPARAGRAFSDLADLTIEAALQAVTAEFAARHGTIAGGVVSLLGMGKLGSRELTAGSDVDLILLYDHDADAEDSDGDKPLAPSHYYTRMTQRLISAVSAPTAEGVLYELDLRLRPSGNKGPVATHIDAFKKYQRQEAWTWEHMALSRARAIGGDTGLCAEVEAEVAAVLGQPRDAAKVKTEAADMRAMIEKEKPARDLWDIKLIPGGLIDLEFIAQVAVITGQVGAGPRATGTAEILSRLAPGFADAGARQELGAAFALYLALTQMTRLCLTGSFERDDVPPGLSDLLLAVTDLPDFGVLEAHLKETSQKVRKDFDLLLRAGRP.

The adenylyl removase stretch occupies residues M1 to T470. Residues A476–P986 form an adenylyl transferase region.

It belongs to the GlnE family. Mg(2+) is required as a cofactor.

It catalyses the reaction [glutamine synthetase]-O(4)-(5'-adenylyl)-L-tyrosine + phosphate = [glutamine synthetase]-L-tyrosine + ADP. It carries out the reaction [glutamine synthetase]-L-tyrosine + ATP = [glutamine synthetase]-O(4)-(5'-adenylyl)-L-tyrosine + diphosphate. In terms of biological role, involved in the regulation of glutamine synthetase GlnA, a key enzyme in the process to assimilate ammonia. When cellular nitrogen levels are high, the C-terminal adenylyl transferase (AT) inactivates GlnA by covalent transfer of an adenylyl group from ATP to specific tyrosine residue of GlnA, thus reducing its activity. Conversely, when nitrogen levels are low, the N-terminal adenylyl removase (AR) activates GlnA by removing the adenylyl group by phosphorolysis, increasing its activity. The regulatory region of GlnE binds the signal transduction protein PII (GlnB) which indicates the nitrogen status of the cell. The polypeptide is Bifunctional glutamine synthetase adenylyltransferase/adenylyl-removing enzyme (Mesorhizobium japonicum (strain LMG 29417 / CECT 9101 / MAFF 303099) (Mesorhizobium loti (strain MAFF 303099))).